Here is a 555-residue protein sequence, read N- to C-terminus: Protein NRT1/ PTR FAMILY 5.4 (555 aa).

2 helical membrane-spanning segments follow: residues 18–38 (AALF…GLAS) and 62–82 (WIGV…SILG). A Phosphothreonine modification is found at Thr-86. The next 10 helical transmembrane spans lie at 87–107 (VLLT…SVTV), 116–136 (VFFM…PCVM), 159–179 (NYWY…LIFI), 187–207 (LGFS…LIGI), 311–331 (IPIW…NTFF), 348–368 (IPPA…IPLY), 392–412 (IGVG…VEAK), 435–455 (LWLL…IVGM), 470–490 (IGAA…TGII), and 516–536 (YYYW…LFIA).

It belongs to the major facilitator superfamily. Proton-dependent oligopeptide transporter (POT/PTR) (TC 2.A.17) family. In terms of tissue distribution, expressed in roots and flowers.

The protein localises to the membrane. The sequence is that of Protein NRT1/ PTR FAMILY 5.4 (NPF5.4) from Arabidopsis thaliana (Mouse-ear cress).